Reading from the N-terminus, the 78-residue chain is Large ribosomal subunit protein eL20 (78 aa).

It belongs to the eukaryotic ribosomal protein eL20 family. As to quaternary structure, part of the 50S ribosomal subunit. Binds 23S rRNA.

The protein is Large ribosomal subunit protein eL20 of Pyrobaculum calidifontis (strain DSM 21063 / JCM 11548 / VA1).